The chain runs to 150 residues: Glycine cleavage system H-like protein gcvH2 (150 aa).

The Lipoyl-binding domain maps to 44-126; sequence VATVGLSSFG…PANNWMVKFK (83 aa).

The protein belongs to the GcvH family.

In Dictyostelium discoideum (Social amoeba), this protein is Glycine cleavage system H-like protein gcvH2 (gcvH2).